Reading from the N-terminus, the 297-residue chain is Protein muscleblind (297 aa).

2 C3H1-type zinc fingers span residues 18-46 (WLQLEVCREFQRNKCSRQDTECKFAHPPA) and 52-80 (NGKVTACYDSIKGRCNRDKPPCKYFHPPQ).

Belongs to the muscleblind family. Expressed in embryonic muscle cells.

It localises to the nucleus. Its function is as follows. Required for terminal differentiation of photoreceptor cells. Vital for embryonic development. This is Protein muscleblind (mbl) from Drosophila melanogaster (Fruit fly).